A 108-amino-acid polypeptide reads, in one-letter code: DNA-binding protein HBbu (108 aa).

This sequence belongs to the bacterial histone-like protein family.

Histone-like DNA-binding protein which is capable of wrapping DNA to stabilize it, and thus to prevent its denaturation under extreme environmental conditions. The protein is DNA-binding protein HBbu (hbb) of Borrelia turicatae.